A 426-amino-acid chain; its full sequence is Histidine--tRNA ligase (426 aa).

This sequence belongs to the class-II aminoacyl-tRNA synthetase family. Homodimer.

It localises to the cytoplasm. The enzyme catalyses tRNA(His) + L-histidine + ATP = L-histidyl-tRNA(His) + AMP + diphosphate + H(+). The chain is Histidine--tRNA ligase from Streptococcus thermophilus (strain ATCC BAA-491 / LMD-9).